Reading from the N-terminus, the 152-residue chain is Flagellar basal-body rod protein FlgC (152 aa).

It belongs to the flagella basal body rod proteins family. The basal body constitutes a major portion of the flagellar organelle and consists of four rings (L,P,S, and M) mounted on a central rod. The rod consists of about 26 subunits of FlgG in the distal portion, and FlgB, FlgC and FlgF are thought to build up the proximal portion of the rod with about 6 subunits each.

Its subcellular location is the bacterial flagellum basal body. The protein is Flagellar basal-body rod protein FlgC (flgC) of Borreliella burgdorferi (strain ATCC 35210 / DSM 4680 / CIP 102532 / B31) (Borrelia burgdorferi).